Here is a 563-residue protein sequence, read N- to C-terminus: Tripeptidyl-peptidase 1 (563 aa).

Positions 1-19 (MGPRSGLLGLFALFVAGKC) are cleaved as a signal peptide. A propeptide spans 20–195 (SYSPEPDQQR…PEPQVPGTVG (176 aa)) (removed in mature form). A disulfide bridge links C111 with C122. The Peptidase S53 domain occupies 199–563 (GVTPSVIRKR…PALLKTLMNP (365 aa)). N210 and N222 each carry an N-linked (GlcNAc...) asparagine glycan. Catalysis depends on charge relay system residues E272 and D276. N-linked (GlcNAc...) asparagine glycosylation is found at N286, N313, and N443. 2 disulfide bridges follow: C365–C526 and C522–C537. S475 acts as the Charge relay system in catalysis. Residues D517 and V518 each contribute to the Ca(2+) site. 3 residues coordinate Ca(2+): G539, G541, and D543.

In terms of assembly, monomer. Interacts with CLN5. Interacts with CLN3. It depends on Ca(2+) as a cofactor. Post-translationally, activated by autocatalytic proteolytical processing upon acidification. N-glycosylation is required for processing and activity.

The protein resides in the lysosome. It localises to the melanosome. It carries out the reaction Release of an N-terminal tripeptide from a polypeptide, but also has endopeptidase activity.. In terms of biological role, lysosomal serine protease with tripeptidyl-peptidase I activity. May act as a non-specific lysosomal peptidase which generates tripeptides from the breakdown products produced by lysosomal proteinases. Requires substrates with an unsubstituted N-terminus. In Bos taurus (Bovine), this protein is Tripeptidyl-peptidase 1 (TPP1).